Here is a 607-residue protein sequence, read N- to C-terminus: Elongation factor 4 (607 aa).

In terms of domain architecture, tr-type G spans 11 to 193 (ENIRNFSIIA…KIVDVVPAPD (183 aa)). GTP-binding positions include 23–28 (DHGKST) and 140–143 (NKID).

This sequence belongs to the TRAFAC class translation factor GTPase superfamily. Classic translation factor GTPase family. LepA subfamily.

The protein localises to the cell membrane. It catalyses the reaction GTP + H2O = GDP + phosphate + H(+). Its function is as follows. Required for accurate and efficient protein synthesis under certain stress conditions. May act as a fidelity factor of the translation reaction, by catalyzing a one-codon backward translocation of tRNAs on improperly translocated ribosomes. Back-translocation proceeds from a post-translocation (POST) complex to a pre-translocation (PRE) complex, thus giving elongation factor G a second chance to translocate the tRNAs correctly. Binds to ribosomes in a GTP-dependent manner. The chain is Elongation factor 4 from Staphylococcus epidermidis (strain ATCC 35984 / DSM 28319 / BCRC 17069 / CCUG 31568 / BM 3577 / RP62A).